Here is a 412-residue protein sequence, read N- to C-terminus: Nucleoside transporter 1 (412 aa).

Residues 1-21 are disordered; that stretch reads MSKIKESSSGILGASNNTNKE. Residues 1 to 29 lie on the Cytoplasmic side of the membrane; that stretch reads MSKIKESSSGILGASNNTNKESSQKSARS. The segment covering 7–21 has biased composition (polar residues); the sequence is SSSGILGASNNTNKE. The helical transmembrane segment at 30–50 threads the bilayer; the sequence is IALPMTYALIGVSCLNVWNSA. At 51 to 56 the chain is on the extracellular side; the sequence is LGLNIK. Residues 57 to 77 traverse the membrane as a helical segment; it reads ITYNIFQMAGLLTSSVLALFV. Topologically, residues 78-81 are cytoplasmic; sequence NYPR. The chain crosses the membrane as a helical span at residues 82–102; it reads VLLPTSLGVLTLLCAGFQIAH. Over 103-114 the chain is Extracellular; that stretch reads QTFSDSAFDTYC. Residues 115–135 form a helical membrane-spanning segment; it reads LAAFITIGLMAGIAQTIAFAI. At 136-144 the chain is on the cytoplasmic side; sequence GTTKESNMS. A helical membrane pass occupies residues 145-165; sequence GYISAGIGMSGVLIFCINLIL. At 166–181 the chain is on the extracellular side; sequence DYIVSDEKIYEINKSK. The helical transmembrane segment at 182 to 202 threads the bilayer; the sequence is LLCLFSISEIFLIITIVCCVL. Over 203 to 240 the chain is Cytoplasmic; it reads YIDLFPKNDNNKDSTDIEKAEEKEGRLPLIEIIKDGYK. Residues 241-261 traverse the membrane as a helical segment; that stretch reads AILSIFLVNWLSLQLFPGIGH. Residues 262 to 271 lie on the Extracellular side of the membrane; the sequence is KKWQEKHGMT. A helical transmembrane segment spans residues 272–294; sequence DNNVTIIVGMFQVFDFISRYPPN. Residues 295–310 are Cytoplasmic-facing; sequence FTHIKIFKYFTFSLNT. A helical transmembrane segment spans residues 311-331; the sequence is LLIGNFLRLLFIPWFVLNAVI. Residues 332–343 lie on the Extracellular side of the membrane; that stretch reads SSSFFTNIVQQC. Residues 344-364 traverse the membrane as a helical segment; sequence VCIAALAFTNGWFNTVPFIVF. At 365-382 the chain is on the cytoplasmic side; the sequence is VKELKKVKHQKDIETISR. Residues 383 to 403 form a helical membrane-spanning segment; it reads IMVVSLFFGLFFGMLTTCLYD. At 404–412 the chain is on the extracellular side; it reads YFPIGILNN.

This sequence belongs to the SLC29A/ENT transporter (TC 2.A.57) family.

The protein localises to the cell membrane. It catalyses the reaction inosine(in) = inosine(out). The enzyme catalyses adenosine(in) = adenosine(out). The catalysed reaction is hypoxanthine(out) = hypoxanthine(in). It carries out the reaction guanosine(in) = guanosine(out). It catalyses the reaction guanine(out) = guanine(in). The enzyme catalyses thymidine(in) = thymidine(out). The catalysed reaction is uridine(out) = uridine(in). It carries out the reaction uracil(in) = uracil(out). It catalyses the reaction thymine(out) = thymine(in). The enzyme catalyses adenine(out) = adenine(in). The catalysed reaction is cytosine(out) = cytosine(in). It carries out the reaction xanthine(out) = xanthine(in). In terms of biological role, nucleoside and nucleobase transporter with a broad substrate specificity. The chain is Nucleoside transporter 1 from Plasmodium berghei (strain Anka).